The chain runs to 394 residues: Argininosuccinate synthase (394 aa).

8-16 contacts ATP; the sequence is AYSGGLDTS. L-citrulline contacts are provided by tyrosine 86 and serine 91. Glycine 116 serves as a coordination point for ATP. L-aspartate is bound by residues threonine 118, asparagine 122, and aspartate 123. Asparagine 122 contributes to the L-citrulline binding site. Positions 126, 172, 181, 257, and 269 each coordinate L-citrulline.

Belongs to the argininosuccinate synthase family. Type 1 subfamily. Homotetramer.

It localises to the cytoplasm. It catalyses the reaction L-citrulline + L-aspartate + ATP = 2-(N(omega)-L-arginino)succinate + AMP + diphosphate + H(+). It participates in amino-acid biosynthesis; L-arginine biosynthesis; L-arginine from L-ornithine and carbamoyl phosphate: step 2/3. The sequence is that of Argininosuccinate synthase from Methanosarcina acetivorans (strain ATCC 35395 / DSM 2834 / JCM 12185 / C2A).